The primary structure comprises 943 residues: U3 small nucleolar RNA-associated protein 12 (943 aa).

WD repeat units follow at residues 77-107 (AKPAECTYLEAHKDTDLLAVGYADGVIKVWD), 119-149 (GHKAAITLLQFDGTGTRLISGSKDSNIIVWD), 161-190 (SHKDSITGFWCQGEDWLISTSKDGMIKLWD), 202-230 (AHTGECWGLAVKDDLLITTGTDSQVKIWK), 389-418 (GQRTDVRSIDISDDNKLLATASNGSLKIWN), 428-458 (FECGYALTCKFLPGGLLVILGTRNGELQLFD), 471-501 (AHDAAIWSLDLTSDGKRLVTGSADKTVKFWD), 571-601 (GHKLPVLSIDISFDSKMIITSSADKNIKIWG), 613-643 (AHQDSIMNVKFLPQSHNFFSCSKDAVVKYWD), and 655-685 (AHQSEVWALAVATDGGFVVSSSHDHSIRIWE). A disordered region spans residues 715–739 (EGNGDDAFKADASGEGVEDEASGVH).

It belongs to the WD repeat WDR3/UTP12 family. Interacts with snoRNA U3. Interacts with MPP10. Component of the ribosomal small subunit (SSU) processome composed of at least 40 protein subunits and snoRNA U3.

The protein localises to the nucleus. Its subcellular location is the nucleolus. Involved in nucleolar processing of pre-18S ribosomal RNA. This is U3 small nucleolar RNA-associated protein 12 (DIP2) from Saccharomyces cerevisiae (strain ATCC 204508 / S288c) (Baker's yeast).